The primary structure comprises 58 residues: Large ribosomal subunit protein uL30 (58 aa).

This sequence belongs to the universal ribosomal protein uL30 family. Part of the 50S ribosomal subunit.

The chain is Large ribosomal subunit protein uL30 from Wigglesworthia glossinidia brevipalpis.